Reading from the N-terminus, the 712-residue chain is Sterol uptake control protein 2 (712 aa).

The span at 1 to 19 (MMMTVKQESPNSTLNTSEF) shows a compositional bias: polar residues. The interval 1-52 (MMMTVKQESPNSTLNTSEFSSDENLKTNNSEPPKKVSKSSTGKRKYHQKSRN) is disordered. Basic residues predominate over residues 35 to 50 (KVSKSSTGKRKYHQKS). Residues 54 to 81 (CSTCKKRRVKCDEQRPVCGNCTKLKLDC) constitute a DNA-binding region (zn(2)-C6 fungal-type). Disordered stretches follow at residues 95–150 (KKDI…VIPP) and 236–342 (TTVP…ANPL). Composition is skewed to polar residues over residues 113 to 143 (STVS…QDIK), 252 to 306 (RKSQ…SGSP), and 326 to 337 (KSLPNISPNMSI).

The protein resides in the nucleus. Functionally, transcription factor involved in the regulation of ergosterol biosynthetic genes such as ERG2 and ERG11 through direct binding to sterol response elements (SREs) in the promoters. Also binds to its own promoter on 2 cis-acting elements to promote autoregulation. Regulates sterol uptake across the plasma membrane. Acts as a major regulator of ascorbic acid-induced response. Plays a role in the triggering of pyroptosis, an inflammasome-mediated programmed cell death pathway in macrophages, allowing macrophages escaping. The chain is Sterol uptake control protein 2 from Candida albicans (strain SC5314 / ATCC MYA-2876) (Yeast).